Reading from the N-terminus, the 295-residue chain is N-acetylmuramic acid 6-phosphate etherase (295 aa).

The SIS domain maps to Ala-55–Lys-218. Glu-83 (proton donor) is an active-site residue. Glu-114 is an active-site residue.

It belongs to the GCKR-like family. MurNAc-6-P etherase subfamily. Homodimer.

The enzyme catalyses N-acetyl-D-muramate 6-phosphate + H2O = N-acetyl-D-glucosamine 6-phosphate + (R)-lactate. Its pathway is amino-sugar metabolism; 1,6-anhydro-N-acetylmuramate degradation. The protein operates within amino-sugar metabolism; N-acetylmuramate degradation. It participates in cell wall biogenesis; peptidoglycan recycling. Specifically catalyzes the cleavage of the D-lactyl ether substituent of MurNAc 6-phosphate, producing GlcNAc 6-phosphate and D-lactate. Together with AnmK, is also required for the utilization of anhydro-N-acetylmuramic acid (anhMurNAc) either imported from the medium or derived from its own cell wall murein, and thus plays a role in cell wall recycling. The polypeptide is N-acetylmuramic acid 6-phosphate etherase (Yersinia pseudotuberculosis serotype O:1b (strain IP 31758)).